The chain runs to 340 residues: Putative RRN3-like protein RRN3P2 (340 aa).

It belongs to the RRN3 family.

This is Putative RRN3-like protein RRN3P2 (RRN3P2) from Homo sapiens (Human).